Here is a 435-residue protein sequence, read N- to C-terminus: Glutamyl-tRNA reductase (435 aa).

Substrate-binding positions include 49 to 52, Ser-109, 114 to 116, and Gln-120; these read TCNR and EGQ. Cys-50 functions as the Nucleophile in the catalytic mechanism. 198–203 serves as a coordination point for NADP(+); sequence GAGRMS.

This sequence belongs to the glutamyl-tRNA reductase family. As to quaternary structure, homodimer.

It carries out the reaction (S)-4-amino-5-oxopentanoate + tRNA(Glu) + NADP(+) = L-glutamyl-tRNA(Glu) + NADPH + H(+). Its pathway is porphyrin-containing compound metabolism; protoporphyrin-IX biosynthesis; 5-aminolevulinate from L-glutamyl-tRNA(Glu): step 1/2. The protein operates within porphyrin-containing compound metabolism; chlorophyll biosynthesis. Functionally, catalyzes the NADPH-dependent reduction of glutamyl-tRNA(Glu) to glutamate 1-semialdehyde (GSA). The chain is Glutamyl-tRNA reductase from Prochlorococcus marinus (strain MIT 9515).